A 564-amino-acid chain; its full sequence is Probable cysteine--tRNA ligase, mitochondrial (564 aa).

Cysteine 78 contacts Zn(2+). L-cysteine is bound at residue glycine 79. The short motif at 80-90 (PTVYDHAHLGH) is the 'HIGH' region element. Position 119 (threonine 119) interacts with L-cysteine. The 'KIIK' region signature appears at 124–127 (KIIK). Residues cysteine 257, histidine 282, and glutamate 286 each contribute to the Zn(2+) site. L-cysteine is bound at residue histidine 282. The short motif at 317-321 (KMSKS) is the 'KMSKS' region element. Position 320 (lysine 320) interacts with ATP.

The protein belongs to the class-I aminoacyl-tRNA synthetase family. Requires Zn(2+) as cofactor.

The protein localises to the mitochondrion. The catalysed reaction is tRNA(Cys) + L-cysteine + ATP = L-cysteinyl-tRNA(Cys) + AMP + diphosphate. The enzyme catalyses 2 L-cysteine = S-sulfanyl-L-cysteine + L-alanine. It catalyses the reaction S-sulfanyl-L-cysteine + L-cysteine = S-disulfanyl-L-cysteine + L-alanine. It carries out the reaction S-sulfanyl-L-cysteine + tRNA(Cys) + ATP = (S)-sulfanyl-L-cysteinyl-tRNA(Cys) + AMP + diphosphate. The catalysed reaction is S-disulfanyl-L-cysteine + tRNA(Cys) + ATP = (S)-disulfanyl-L-cysteinyl-tRNA(Cys) + AMP + diphosphate. Functionally, mitochondrial cysteine-specific aminoacyl-tRNA synthetase that catalyzes the ATP-dependent ligation of cysteine to tRNA(Cys). In terms of biological role, in addition to its role as an aminoacyl-tRNA synthetase, has also cysteine persulfide synthase activity. Produces reactive persulfide species such as cysteine persulfide (CysSSH) from substrate cysteine and mediate direct incorporation of CysSSH into proteins during translations, resulting in protein persulfides and polysulfides. CysSSHs behave as potent antioxidants and cellular protectants. In Homo sapiens (Human), this protein is Probable cysteine--tRNA ligase, mitochondrial.